The following is a 587-amino-acid chain: Probable phosphoribomutase (587 aa).

Substrate-binding positions include Thr49, Arg53, and 149 to 150 (SH). Residue Ser149 is the Phosphoserine intermediate of the active site. Mg(2+) is bound by residues Ser149, Asp306, Asp308, and Asp310. Phosphoserine is present on Ser149. Substrate-binding positions include 310–311 (DR), Thr380, 404–406 (EEA), and Lys418.

This sequence belongs to the phosphohexose mutase family. It depends on Mg(2+) as a cofactor.

Its subcellular location is the cytoplasm. It localises to the nucleus. It catalyses the reaction alpha-D-ribose 1-phosphate = D-ribose 5-phosphate. Its function is as follows. Converts ribose 1-phosphate to ribose 5-phosphate. Involved in ribose salvage via the pentose phosphate pathway. The protein is Probable phosphoribomutase of Schizosaccharomyces pombe (strain 972 / ATCC 24843) (Fission yeast).